The chain runs to 728 residues: Polyribonucleotide nucleotidyltransferase (728 aa).

Positions 487 and 493 each coordinate Mg(2+). Positions 554–613 (PRIEVITVPTDKIREVIGTGGKVIREIVEKTGAKVDISDDGTIKVASSDGESIRKAIAWI) constitute a KH domain. The 69-residue stretch at 623-691 (GKIYEGTVVK…DRGKVRLSMK (69 aa)) folds into the S1 motif domain. Over residues 697–707 (TGEEIVYENEP) the composition is skewed to acidic residues. Residues 697–728 (TGEEIVYENEPAEQPREKREGGGGRGRRRERD) are disordered. A compositionally biased stretch (basic and acidic residues) spans 709 to 718 (EQPREKREGG).

The protein belongs to the polyribonucleotide nucleotidyltransferase family. Mg(2+) serves as cofactor.

Its subcellular location is the cytoplasm. The catalysed reaction is RNA(n+1) + phosphate = RNA(n) + a ribonucleoside 5'-diphosphate. Its function is as follows. Involved in mRNA degradation. Catalyzes the phosphorolysis of single-stranded polyribonucleotides processively in the 3'- to 5'-direction. This Parvibaculum lavamentivorans (strain DS-1 / DSM 13023 / NCIMB 13966) protein is Polyribonucleotide nucleotidyltransferase.